Consider the following 682-residue polypeptide: Probable xyloglucan glycosyltransferase 6 (682 aa).

2 helical membrane-spanning segments follow: residues 109 to 129 (LIKG…AAYF) and 173 to 193 (IVLF…CFWI). Residue aspartate 260 is part of the active site. Residues aspartate 319 and aspartate 321 each coordinate substrate. Residue aspartate 413 is part of the active site. Helical transmembrane passes span 491–511 (LILP…TMFF) and 516–536 (LPSW…IIPA). The residue at position 608 (serine 608) is a Phosphoserine. 2 helical membrane passes run 632 to 651 (LYRT…VRSL) and 657 to 677 (IHFY…LDLI).

The protein belongs to the glycosyltransferase 2 family. Plant cellulose synthase-like C subfamily. In terms of assembly, homodimer. In terms of tissue distribution, mainly expressed in flowers and seeds, and, to a lower extent, in seedlings, roots, leaves and stems.

It is found in the golgi apparatus membrane. Its function is as follows. Probable beta-1,4-glucan synthase rather involved in the synthesis of the xyloglucan backbone than cellulose. Seems to work simultaneously with xyloglucan 6-xylosyltransferase. Xyloglucan is a noncellulosic polysaccharides of plant cell wall and consists of a glucan backbone substituted by xylose, galactose and fucose. This Arabidopsis thaliana (Mouse-ear cress) protein is Probable xyloglucan glycosyltransferase 6.